An 864-amino-acid chain; its full sequence is DNA mismatch repair protein MutS (864 aa).

An ATP-binding site is contributed by 613–620 (GPNMGGKS).

Belongs to the DNA mismatch repair MutS family.

In terms of biological role, this protein is involved in the repair of mismatches in DNA. It is possible that it carries out the mismatch recognition step. This protein has a weak ATPase activity. This chain is DNA mismatch repair protein MutS, found in Actinobacillus pleuropneumoniae serotype 7 (strain AP76).